The chain runs to 154 residues: 6,7-dimethyl-8-ribityllumazine synthase (154 aa).

Residues Phe-22, 56–58, and 80–82 contribute to the 5-amino-6-(D-ribitylamino)uracil site; these read AFE and AVI. Residue 85 to 86 coordinates (2S)-2-hydroxy-3-oxobutyl phosphate; the sequence is AT. His-88 acts as the Proton donor in catalysis. Phe-113 contacts 5-amino-6-(D-ribitylamino)uracil. (2S)-2-hydroxy-3-oxobutyl phosphate is bound at residue Arg-127.

This sequence belongs to the DMRL synthase family. In terms of assembly, forms an icosahedral capsid composed of 60 subunits, arranged as a dodecamer of pentamers.

The catalysed reaction is (2S)-2-hydroxy-3-oxobutyl phosphate + 5-amino-6-(D-ribitylamino)uracil = 6,7-dimethyl-8-(1-D-ribityl)lumazine + phosphate + 2 H2O + H(+). It participates in cofactor biosynthesis; riboflavin biosynthesis; riboflavin from 2-hydroxy-3-oxobutyl phosphate and 5-amino-6-(D-ribitylamino)uracil: step 1/2. Catalyzes the formation of 6,7-dimethyl-8-ribityllumazine by condensation of 5-amino-6-(D-ribitylamino)uracil with 3,4-dihydroxy-2-butanone 4-phosphate. This is the penultimate step in the biosynthesis of riboflavin. This Geobacillus thermodenitrificans (strain NG80-2) protein is 6,7-dimethyl-8-ribityllumazine synthase.